The following is a 519-amino-acid chain: Exodeoxyribonuclease 7 large subunit (519 aa).

It belongs to the XseA family. In terms of assembly, heterooligomer composed of large and small subunits.

The protein localises to the cytoplasm. It catalyses the reaction Exonucleolytic cleavage in either 5'- to 3'- or 3'- to 5'-direction to yield nucleoside 5'-phosphates.. In terms of biological role, bidirectionally degrades single-stranded DNA into large acid-insoluble oligonucleotides, which are then degraded further into small acid-soluble oligonucleotides. This Cereibacter sphaeroides (strain ATCC 17025 / ATH 2.4.3) (Rhodobacter sphaeroides) protein is Exodeoxyribonuclease 7 large subunit.